The following is a 160-amino-acid chain: Endoplasmic reticulum transmembrane protein 2 (160 aa).

Over 1-2 the chain is Lumenal; the sequence is MG. Residues 3 to 23 traverse the membrane as a helical segment; sequence VYLAVLFSLLVIEMAILFILV. Topologically, residues 24–45 are cytoplasmic; sequence LPLPQRMRRWLYIRYSIISTNK. A helical transmembrane segment spans residues 46–66; it reads KFRTYMVGIMIFVGLLFIDSW. The Lumenal portion of the chain corresponds to 67-103; sequence KRSQIRVSTYRNQKNPYIINSVTPVDALASRAYNQRN. Residues 104-124 form a helical membrane-spanning segment; that stretch reads VYISGFIIYFYICILTVMSIL. The Cytoplasmic segment spans residues 125–160; that stretch reads RRIVEWNDKMKAGDDILKEKLRRKQKYLEELQKKKF. The short motif at 157 to 160 is the Di-lysine motif element; the sequence is KKKF.

This sequence belongs to the BCAP29/BCAP31 family.

The protein localises to the endoplasmic reticulum membrane. May play a role in anterograde transport of membrane proteins from the endoplasmic reticulum to the Golgi. In Saccharomyces cerevisiae (strain ATCC 204508 / S288c) (Baker's yeast), this protein is Endoplasmic reticulum transmembrane protein 2 (YET2).